The following is a 420-amino-acid chain: RING finger protein 39 (420 aa).

Residues C88–G135 form an RING-type zinc finger. The B30.2/SPRY domain occupies D210 to S420. A disordered region spans residues D246–K265.

The protein resides in the cytoplasm. The catalysed reaction is S-ubiquitinyl-[E2 ubiquitin-conjugating enzyme]-L-cysteine + [acceptor protein]-L-lysine = [E2 ubiquitin-conjugating enzyme]-L-cysteine + N(6)-ubiquitinyl-[acceptor protein]-L-lysine.. Its pathway is protein modification; protein ubiquitination. Its function is as follows. Plays an inhibitory role in anti-RNA viral innate immunity by targeting the adapter DDX3X and promoting its 'Lys-48'-linked polyubiquitination. Alternatively, enhances the cGAS-STING pathway activation by promoting 'Lys-63'-linked ubiquitination of STING1, facilitating the STING1-TBK1 complex formation and STING1 activation. The chain is RING finger protein 39 (RNF39) from Pan troglodytes (Chimpanzee).